Reading from the N-terminus, the 585-residue chain is MTPDGLYCDPAELDWSQPSGPRARAYGDVYFSAEDGLEEARAVFLRGCGLPEAWTGRRHYVVGELGFGTGLNALALWQLWRQTRPTDGWLDFVTVEKHPLDRDAAARAFAAWPELSDLASRLLTQWPSRLRGPQRLVFPEDGFAITIFQDEVEAALSQMTRPVDAWFLDGFAPDRNAAMWSQAVFNRLGELSVPGTRVGTFTVAGFVRRGLAEAGFDVAKRPGFGRKRERLEAVWPGEAVDGSLANVDGPVAVLGAGIAGASLVHALRRRGIETVLIDAHGVASGASGAPAGLLTPRLEKADRPHVRATLAAFDFARRLYDGRPGFHAEPVRRLPKDEREAERFAILADWMPDHLDWTGEALVMPGAGRFEPARLVADLVADAQCHRARIGRVEPLGSGIGLYDDAGECRFEVAHLVIAAGAGARRFYPDLQPSAGQLAVFDGAPPDMPTAWGNYACAAPGGVLVGATHDRGDQVGPEDVAEAGFRASVAERMPGLALGPVQGRWQGVRAATPDRLPVAGRLSERVSILAGLGSRGFAHAPLLAEDLASELMGGVPALAQTGREAMAPGRFAERRSRRAGQGAAG.

The tract at residues 1 to 236 is tRNA (mnm(5)s(2)U34)-methyltransferase; the sequence is MTPDGLYCDP…KRERLEAVWP (236 aa). The segment at 254–585 is FAD-dependent cmnm(5)s(2)U34 oxidoreductase; sequence LGAGIAGASL…SRRAGQGAAG (332 aa). The segment at 564–585 is disordered; that stretch reads EAMAPGRFAERRSRRAGQGAAG.

This sequence in the N-terminal section; belongs to the methyltransferase superfamily. tRNA (mnm(5)s(2)U34)-methyltransferase family. It in the C-terminal section; belongs to the DAO family. It depends on FAD as a cofactor.

Its subcellular location is the cytoplasm. The catalysed reaction is 5-aminomethyl-2-thiouridine(34) in tRNA + S-adenosyl-L-methionine = 5-methylaminomethyl-2-thiouridine(34) in tRNA + S-adenosyl-L-homocysteine + H(+). Its function is as follows. Catalyzes the last two steps in the biosynthesis of 5-methylaminomethyl-2-thiouridine (mnm(5)s(2)U) at the wobble position (U34) in tRNA. Catalyzes the FAD-dependent demodification of cmnm(5)s(2)U34 to nm(5)s(2)U34, followed by the transfer of a methyl group from S-adenosyl-L-methionine to nm(5)s(2)U34, to form mnm(5)s(2)U34. The polypeptide is tRNA 5-methylaminomethyl-2-thiouridine biosynthesis bifunctional protein MnmC (Maricaulis maris (strain MCS10) (Caulobacter maris)).